We begin with the raw amino-acid sequence, 82 residues long: uncharacterized protein (82 aa).

This is an uncharacterized protein from Orgyia pseudotsugata (Douglas-fir tussock moth).